A 369-amino-acid chain; its full sequence is Caffeine synthase 1 (369 aa).

Tyrosine 24 provides a ligand contact to S-adenosyl-L-homocysteine. Caffeine is bound at residue threonine 31. 6 residues coordinate S-adenosyl-L-homocysteine: cysteine 66, asparagine 71, aspartate 103, leucine 104, serine 138, and phenylalanine 139. Positions 156, 159, and 160 each coordinate caffeine. Residue asparagine 177 coordinates Mg(2+). Position 225 (arginine 225) interacts with caffeine. Aspartate 263, phenylalanine 265, and asparagine 266 together coordinate Mg(2+). Phenylalanine 321 is a caffeine binding site.

Belongs to the methyltransferase superfamily. Type-7 methyltransferase family. Mg(2+) is required as a cofactor.

The enzyme catalyses theobromine + S-adenosyl-L-methionine = caffeine + S-adenosyl-L-homocysteine + H(+). It carries out the reaction 7-methylxanthine + S-adenosyl-L-methionine = theobromine + S-adenosyl-L-homocysteine + H(+). It functions in the pathway alkaloid biosynthesis. Involved in the biosynthesis of caffeine. Catalyzes the conversion of 7-methylxanthine (7mX) to theobromine and of theobromine to caffeine. The chain is Caffeine synthase 1 from Camellia crassicolumna (Evergreen tea).